We begin with the raw amino-acid sequence, 217 residues long: Neurotrophic factor BDNF precursor form (217 aa).

Residues 1-108 constitute a propeptide that is removed on maturation; sequence PMKEVSIRGQ…AANMSMRVRR (108 aa). Asn101 carries N-linked (GlcNAc...) asparagine glycosylation. Disulfide bonds link Cys121/Cys188 and Cys166/Cys217.

Belongs to the NGF-beta family.

It localises to the secreted. Promotes the survival of neuronal populations that are all located either in the central nervous system or directly connected to it. The sequence is that of Neurotrophic factor BDNF precursor form (BDNF) from Acrantophis dumerili (Dumeril's ground boa).